The chain runs to 205 residues: MESKLRVGIAGPVGSGKTAIIQRLCENLKDRLEIAVVTNDIYTQEDAKFLTNSKALAPERIKGVETGGCPHTAIREDCSINRIAVEELEHEFTTLDLVFVESGGDNLAASFSPELVDVCIYIIDVAAGDKIPRKGGPGITRSDLLVINKIDLAEMVGASLKIMERDTLLMRKNLPWCFTNTKTGEGIKIIAEFLCNQIPFARKMV.

11–18 (GPVGSGKT) is a binding site for GTP.

Belongs to the SIMIBI class G3E GTPase family. UreG subfamily. As to quaternary structure, homodimer. UreD, UreF and UreG form a complex that acts as a GTP-hydrolysis-dependent molecular chaperone, activating the urease apoprotein by helping to assemble the nickel containing metallocenter of UreC. The UreE protein probably delivers the nickel.

It is found in the cytoplasm. Facilitates the functional incorporation of the urease nickel metallocenter. This process requires GTP hydrolysis, probably effectuated by UreG. This is Urease accessory protein UreG from Prochlorococcus marinus (strain NATL1A).